The chain runs to 313 residues: tRNA dimethylallyltransferase (313 aa).

Position 10–17 (10–17 (GPTASGKT)) interacts with ATP. 12–17 (TASGKT) contributes to the substrate binding site. Interaction with substrate tRNA regions lie at residues 35–38 (DSAM), 159–163 (QRIQR), and 240–245 (RCVGYR).

This sequence belongs to the IPP transferase family. Monomer. Mg(2+) is required as a cofactor.

The catalysed reaction is adenosine(37) in tRNA + dimethylallyl diphosphate = N(6)-dimethylallyladenosine(37) in tRNA + diphosphate. Catalyzes the transfer of a dimethylallyl group onto the adenine at position 37 in tRNAs that read codons beginning with uridine, leading to the formation of N6-(dimethylallyl)adenosine (i(6)A). In Legionella pneumophila (strain Corby), this protein is tRNA dimethylallyltransferase.